The primary structure comprises 391 residues: Small ribosomal subunit protein bS1 (391 aa).

S1 motif domains are found at residues 16–90 (GDKV…LSRR), 108–173 (NEII…LSRK), 194–262 (GDVI…LSIK), and 279–348 (NDVI…LSIK).

It belongs to the bacterial ribosomal protein bS1 family.

Functionally, binds mRNA; thus facilitating recognition of the initiation point. It is needed to translate mRNA with a short Shine-Dalgarno (SD) purine-rich sequence. The sequence is that of Small ribosomal subunit protein bS1 (rpsA) from Staphylococcus aureus (strain N315).